Reading from the N-terminus, the 534-residue chain is CTP synthase (534 aa).

The tract at residues 1–267 (MTKYIFVTGG…DQIVCDHLKL (267 aa)) is amidoligase domain. Serine 13 is a CTP binding site. Residue serine 13 coordinates UTP. Residue 14–19 (SIGKGI) participates in ATP binding. Tyrosine 54 is an L-glutamine binding site. An ATP-binding site is contributed by aspartate 71. Mg(2+) is bound by residues aspartate 71 and glutamate 141. CTP contacts are provided by residues 148 to 150 (DIE), 188 to 193 (KTKPTQ), and lysine 224. UTP contacts are provided by residues 188–193 (KTKPTQ) and lysine 224. The region spanning 292–534 (KIALVGKYVE…FVTAAVENMK (243 aa)) is the Glutamine amidotransferase type-1 domain. Glycine 354 is an L-glutamine binding site. Cysteine 381 functions as the Nucleophile; for glutamine hydrolysis in the catalytic mechanism. L-glutamine is bound by residues 382-385 (LGMQ), glutamate 405, and arginine 463. Active-site residues include histidine 508 and glutamate 510.

The protein belongs to the CTP synthase family. As to quaternary structure, homotetramer.

The catalysed reaction is UTP + L-glutamine + ATP + H2O = CTP + L-glutamate + ADP + phosphate + 2 H(+). It carries out the reaction L-glutamine + H2O = L-glutamate + NH4(+). It catalyses the reaction UTP + NH4(+) + ATP = CTP + ADP + phosphate + 2 H(+). It participates in pyrimidine metabolism; CTP biosynthesis via de novo pathway; CTP from UDP: step 2/2. Its activity is regulated as follows. Allosterically activated by GTP, when glutamine is the substrate; GTP has no effect on the reaction when ammonia is the substrate. The allosteric effector GTP functions by stabilizing the protein conformation that binds the tetrahedral intermediate(s) formed during glutamine hydrolysis. Inhibited by the product CTP, via allosteric rather than competitive inhibition. In terms of biological role, catalyzes the ATP-dependent amination of UTP to CTP with either L-glutamine or ammonia as the source of nitrogen. Regulates intracellular CTP levels through interactions with the four ribonucleotide triphosphates. This chain is CTP synthase, found in Streptococcus agalactiae serotype Ia (strain ATCC 27591 / A909 / CDC SS700).